Consider the following 300-residue polypeptide: Ribosomal protein L11 methyltransferase (300 aa).

S-adenosyl-L-methionine is bound by residues T152, G173, D195, and N234.

It belongs to the methyltransferase superfamily. PrmA family.

The protein localises to the cytoplasm. It carries out the reaction L-lysyl-[protein] + 3 S-adenosyl-L-methionine = N(6),N(6),N(6)-trimethyl-L-lysyl-[protein] + 3 S-adenosyl-L-homocysteine + 3 H(+). In terms of biological role, methylates ribosomal protein L11. The polypeptide is Ribosomal protein L11 methyltransferase (Burkholderia ambifaria (strain ATCC BAA-244 / DSM 16087 / CCUG 44356 / LMG 19182 / AMMD) (Burkholderia cepacia (strain AMMD))).